A 205-amino-acid chain; its full sequence is Cytochrome c biogenesis ATP-binding export protein CcmA (205 aa).

The 203-residue stretch at 2–204 (LEVSNLTAIR…SPKLRKIKLG (203 aa)) folds into the ABC transporter domain. Residue 34–41 (GRNGTGKT) participates in ATP binding.

Belongs to the ABC transporter superfamily. CcmA exporter (TC 3.A.1.107) family. The complex is composed of two ATP-binding proteins (CcmA) and two transmembrane proteins (CcmB).

Its subcellular location is the cell inner membrane. It catalyses the reaction heme b(in) + ATP + H2O = heme b(out) + ADP + phosphate + H(+). Its function is as follows. Part of the ABC transporter complex CcmAB involved in the biogenesis of c-type cytochromes; once thought to export heme, this seems not to be the case, but its exact role is uncertain. Responsible for energy coupling to the transport system. The polypeptide is Cytochrome c biogenesis ATP-binding export protein CcmA (Vibrio parahaemolyticus serotype O3:K6 (strain RIMD 2210633)).